We begin with the raw amino-acid sequence, 151 residues long: Large ribosomal subunit protein bL9 (151 aa).

The protein belongs to the bacterial ribosomal protein bL9 family.

In terms of biological role, binds to the 23S rRNA. This Bordetella pertussis (strain Tohama I / ATCC BAA-589 / NCTC 13251) protein is Large ribosomal subunit protein bL9.